The sequence spans 352 residues: Sphingosine 1-phosphate receptor 2 (352 aa).

The Extracellular portion of the chain corresponds to 1–34; that stretch reads MGGLYSEYLNPEKVLEHYNYTKETLDMQETTSRK. N-linked (GlcNAc...) asparagine glycosylation is present at N19. A helical membrane pass occupies residues 35-59; that stretch reads VASAFIIILCCAIVVENLLVLIAVA. The Cytoplasmic segment spans residues 60-66; sequence RNSKFHS. The chain crosses the membrane as a helical span at residues 67–95; that stretch reads AMYLFLGNLAASDLLAGVAFVANTLLSGH. The Extracellular segment spans residues 96–109; that stretch reads VTLSLTPVQWFARE. The helical transmembrane segment at 110–128 threads the bilayer; sequence GSAFITLSASVFSLLAIAI. The Cytoplasmic portion of the chain corresponds to 129–147; sequence ERQVALAKVKLYGSDKSCR. The helical transmembrane segment at 148–173 threads the bilayer; the sequence is MLMLIGASWLISLILGGLPILGWNCL. Over 174 to 189 the chain is Extracellular; the sequence is NQLEACSTVLPLYAKH. The helical transmembrane segment at 190 to 210 threads the bilayer; that stretch reads YVLCVVTIFSVILLAIVALYV. The Cytoplasmic portion of the chain corresponds to 211 to 233; it reads RIYFVVRSSHADVAGPQTLALLK. Residues 234–255 form a helical membrane-spanning segment; it reads TVTIVLGVFIICWLPAFSILLL. Over 256-271 the chain is Extracellular; that stretch reads DSTCPVRACPVLYKAH. The chain crosses the membrane as a helical span at residues 272 to 292; sequence YFFAFATLNSLLNPVIYTWRS. At 293–352 the chain is on the cytoplasmic side; it reads RDLRREVLRPLQCWRRGKGVTGRRGGNPGHRLLPLRSSSSLERGMHMPTSPTFLEGNTVV. C305 carries the S-palmitoyl cysteine lipid modification. A disordered region spans residues 333 to 352; it reads LERGMHMPTSPTFLEGNTVV.

This sequence belongs to the G-protein coupled receptor 1 family. As to expression, most abundant in heart and lung; low, but clearly observed in kidney, liver and thymus; much lower but detectable in brain, testis, stomach and intestine. Not significantly detected in any of the sections of embryonic day (E) 14-18, except in embryonic brain.

It localises to the cell membrane. Receptor for the lysosphingolipid sphingosine 1-phosphate (S1P). S1P is a bioactive lysophospholipid that elicits diverse physiological effects on most types of cells and tissues. Receptor for the chemokine-like protein FAM19A5. Mediates the inhibitory effect of FAM19A5 on vascular smooth muscle cell proliferation and migration. In lymphoid follicles, couples the binding of S1P to the activation of GNA13 and downstream inhibition of AKT activation leading to suppression of germinal center (GC) B cell growth and migration outside the GC niche. In Mus musculus (Mouse), this protein is Sphingosine 1-phosphate receptor 2 (S1pr2).